A 204-amino-acid polypeptide reads, in one-letter code: Histone chaperone ASF1A (204 aa).

Positions 1 to 156 (MAKVQVNNVV…TRFHINWEDN (156 aa)) are interaction with histone H3, CHAF1B, and HIRA. The short motif at 31–37 (IEDLSED) is the Required for interaction with HIRA element. The interval 155-204 (DNTEKLEDAESSNPNLQSLLSTDALPSASKGWSTSENSLNVMLESHMDCM) is required for interaction with HIRA. Ser192 bears the Phosphoserine mark.

It belongs to the ASF1 family. Interacts with histone H3 (via C-terminus), including histone H3.1, H3.2 and H3.3, and histone H4; the interaction with H3 is direct. Probably interacts with the heterodimeric form of H3-H4 taking the place of the second dimer. Interacts with the CHAF1A, CHAF1B and RBBP4 subunits of the CAF-1 complex. Interacts with CABIN1, HAT1, HIRA, NASP, TAF1 and UBN1. Found in a soluble complex with NASP and histones H3 and H4; the interaction with NASP is probably indirect and mediated by H3-H4. Interacts with CDAN1. Found in a cytosolic complex with IPO4 and histones H3 and H4. Interacts with CREBBP. Post-translationally, phosphorylated by TLK1 and TLK2. Highly phosphorylated in S-phase and at lower levels in M-phase. TLK2-mediated phosphorylation at Ser-192 prevents proteasome-dependent degradation. Phosphorylation at Ser-192 by PRKDC in response to DNA damage promotes the histone chaperone activity and ability to replace histones at double-strand breaks (DSBs) at stalled or collapsed replication forks, leading to RAD51 recruitment.

It is found in the nucleus. The protein localises to the chromosome. Its function is as follows. Histone chaperone that facilitates histone deposition and histone exchange and removal during nucleosome assembly and disassembly. Cooperates with chromatin assembly factor 1 (CAF-1) to promote replication-dependent chromatin assembly and with HIRA to promote replication-independent chromatin assembly. Promotes homologous recombination-mediated repair of double-strand breaks (DSBs) at stalled or collapsed replication forks: acts by mediating histone replacement at DSBs, leading to recruitment of the MMS22L-TONSL complex and subsequent loading of RAD51. Also involved in the nuclear import of the histone H3-H4 dimer together with importin-4 (IPO4): specifically recognizes and binds newly synthesized histones with the monomethylation of H3 'Lys-9' and acetylation at 'Lys-14' (H3K9me1K14ac) marks, and diacetylation at 'Lys-5' and 'Lys-12' of H4 (H4K5K12ac) marks in the cytosol. Required for the formation of senescence-associated heterochromatin foci (SAHF) and efficient senescence-associated cell cycle exit. This chain is Histone chaperone ASF1A, found in Mus musculus (Mouse).